Reading from the N-terminus, the 290-residue chain is 4-hydroxy-tetrahydrodipicolinate synthase (290 aa).

A pyruvate-binding site is contributed by T44. Y132 acts as the Proton donor/acceptor in catalysis. Catalysis depends on K160, which acts as the Schiff-base intermediate with substrate. Residue I202 participates in pyruvate binding.

This sequence belongs to the DapA family. Homotetramer; dimer of dimers.

The protein localises to the cytoplasm. The enzyme catalyses L-aspartate 4-semialdehyde + pyruvate = (2S,4S)-4-hydroxy-2,3,4,5-tetrahydrodipicolinate + H2O + H(+). It functions in the pathway amino-acid biosynthesis; L-lysine biosynthesis via DAP pathway; (S)-tetrahydrodipicolinate from L-aspartate: step 3/4. Functionally, catalyzes the condensation of (S)-aspartate-beta-semialdehyde [(S)-ASA] and pyruvate to 4-hydroxy-tetrahydrodipicolinate (HTPA). This chain is 4-hydroxy-tetrahydrodipicolinate synthase, found in Cereibacter sphaeroides (strain ATCC 17025 / ATH 2.4.3) (Rhodobacter sphaeroides).